The following is a 557-amino-acid chain: TWiK family of potassium channels protein 7 (557 aa).

Disordered regions lie at residues 1 to 34 and 128 to 151; these read MTSSSRGYQRVDSSGDGGSLLMEEEGDNPHEALL and DKSGHEDIDDESDDESKDEDEEEE. The Cytoplasmic segment spans residues 1–165; sequence MTSSSRGYQR…RKFAKLVLPH (165 aa). Acidic residues predominate over residues 134 to 151; that stretch reads DIDDESDDESKDEDEEEE. The helical transmembrane segment at 166–186 threads the bilayer; the sequence is VALVLLTCTYTVIGALIFYSV. Residues Asn220 and Asn237 are each glycosylated (N-linked (GlcNAc...) asparagine). Positions 270–290 form an intramembrane region, pore-forming; the sequence is SIFFAVTVVTTIGYGNPVPVT. A helical transmembrane segment spans residues 295 to 315; that stretch reads IWCILFSLLGIPLTLVTIADL. At 316–368 the chain is on the cytoplasmic side; sequence GKFLSEHLVWLYGNYLKLKYLILSRHRKERREHVCEHCHSHGMGHDMNIEEKR. The helical transmembrane segment at 369-389 threads the bilayer; sequence IPAFLVLAILIVYTAFGGVLM. An intramembrane region (pore-forming) is located at residues 397 to 417; that stretch reads FFTSFYWSFITMTTVGFGDLM. A helical membrane pass occupies residues 426-446; it reads IILLYIILGLAITTMCIDLVG. Topologically, residues 447–557 are cytoplasmic; it reads VQYIRKIHYF…SRYSLNRAFK (111 aa).

Belongs to the two pore domain potassium channel (TC 1.A.1.8) family.

Its subcellular location is the membrane. This Caenorhabditis elegans protein is TWiK family of potassium channels protein 7 (twk-7).